Reading from the N-terminus, the 710-residue chain is Secretin OutD (710 aa).

Residues Met-1–Ala-27 form the signal peptide. The segment at Ala-28–Ser-105 is N0. Residues Ile-123–Gly-190 are N1. Residues Arg-192–Lys-262 are N2. Positions Gly-288–Gln-399 are N3. The disordered stretch occupies residues Asn-289–Gly-353. Residues Leu-401–Arg-648 form a secretin region. The interval Thr-691–Arg-710 is s domain.

It belongs to the bacterial secretin family. GSP D subfamily. Forms a cylindrical channel with 15 subunits. Interacts with pilotin OutS.

The protein localises to the cell outer membrane. Functionally, involved in a type II secretion system (T2SS, formerly general secretion pathway, GSP) for the export of proteins. Required for the translocation of the multiple pectic enzymes. This subunit forms the outer membrane channel. The chain is Secretin OutD (outD) from Dickeya dadantii (strain 3937) (Erwinia chrysanthemi (strain 3937)).